Reading from the N-terminus, the 309-residue chain is Protein FdhE homolog (309 aa).

This sequence belongs to the FdhE family.

Its subcellular location is the cytoplasm. Necessary for formate dehydrogenase activity. The sequence is that of Protein FdhE homolog from Yersinia enterocolitica serotype O:8 / biotype 1B (strain NCTC 13174 / 8081).